The following is a 119-amino-acid chain: Chorion class CA protein ERA.5 (119 aa).

The signal sequence occupies residues M1–S21. A left arm region spans residues Q22 to G55. Residues G56–I103 are central domain. The tract at residues S104–Y119 is right arm.

This sequence belongs to the chorion protein family.

This protein is one of many from the eggshell of the silk moth. The chain is Chorion class CA protein ERA.5 (ERA.5) from Bombyx mori (Silk moth).